Consider the following 453-residue polypeptide: Major fimbrium subunit FimC (453 aa).

A signal peptide spans M1–A28. C29 is lipidated: N-palmitoyl cysteine. The S-diacylglycerol cysteine moiety is linked to residue C29. A propeptide spanning residues C29–R56 is cleaved from the precursor.

The protein belongs to the bacteroidetes fimbrillin superfamily. FimA/Mfa1 family. Fimbriae are composed of a major, structural subunit and the minor components FimC, FimD and FimE. Identified in a complex composed of FimC, FimD and FimE (in vitro). The complex interacts with host extracellular matrix proteins, including fibronectin and type I collagen. Interacts with host CXCR4.

Its subcellular location is the fimbrium. The protein localises to the cell outer membrane. Functionally, minor component of fimbriae. These long, filamentous pili are attached to the cell surface; they mediate biofilm formation, adhesion onto host cells and onto other bacteria that are part of the oral microbiome. They play an important role in invasion of periodontal tissues and are major virulence factors. FimC, FimD and FimE contribute to interaction with host CXCR4 and thereby down-regulate the TLR2-mediated host immune response. The chain is Major fimbrium subunit FimC from Porphyromonas gingivalis (strain ATCC 33277 / DSM 20709 / CIP 103683 / JCM 12257 / NCTC 11834 / 2561).